Here is a 274-residue protein sequence, read N- to C-terminus: Thiamine kinase (274 aa).

This sequence belongs to the thiamine kinase family.

The enzyme catalyses thiamine + ATP = thiamine phosphate + ADP + H(+). The protein operates within cofactor biosynthesis; thiamine diphosphate biosynthesis; thiamine phosphate from thiamine: step 1/1. Catalyzes the ATP-dependent phosphorylation of thiamine to thiamine phosphate. Is involved in thiamine salvage. The polypeptide is Thiamine kinase (Salmonella typhi).